The sequence spans 228 residues: Somatolactin (228 aa).

The signal sequence occupies residues 1–24 (MFSIRMNKVLQGFVCLMLTHRIVG). 3 cysteine pairs are disulfide-bonded: Cys29-Cys38, Cys88-Cys200, and Cys217-Cys225. Residues Asn141 and Asn177 are each glycosylated (N-linked (GlcNAc...) asparagine).

It belongs to the somatotropin/prolactin family.

The protein localises to the secreted. This Anguilla anguilla (European freshwater eel) protein is Somatolactin.